The chain runs to 227 residues: Ribosomal RNA large subunit methyltransferase E (227 aa).

S-adenosyl-L-methionine-binding residues include glycine 78, tryptophan 80, aspartate 103, aspartate 119, and aspartate 143. The active-site Proton acceptor is lysine 183.

This sequence belongs to the class I-like SAM-binding methyltransferase superfamily. RNA methyltransferase RlmE family.

The protein localises to the cytoplasm. It catalyses the reaction uridine(2552) in 23S rRNA + S-adenosyl-L-methionine = 2'-O-methyluridine(2552) in 23S rRNA + S-adenosyl-L-homocysteine + H(+). Specifically methylates the uridine in position 2552 of 23S rRNA at the 2'-O position of the ribose in the fully assembled 50S ribosomal subunit. In Rickettsia akari (strain Hartford), this protein is Ribosomal RNA large subunit methyltransferase E.